A 505-amino-acid chain; its full sequence is AAA-ATPase At5g17760 (505 aa).

A helical transmembrane segment spans residues T11–I27. A disordered region spans residues G136–D155. Over residues G137–R151 the composition is skewed to gly residues. G260–S267 lines the ATP pocket.

This sequence belongs to the AAA ATPase family. BCS1 subfamily. It depends on Mg(2+) as a cofactor.

Its subcellular location is the membrane. The enzyme catalyses ATP + H2O = ADP + phosphate + H(+). This Arabidopsis thaliana (Mouse-ear cress) protein is AAA-ATPase At5g17760.